Reading from the N-terminus, the 608-residue chain is V-type ATP synthase subunit I (608 aa).

Helical transmembrane passes span 308 to 325 (ISFI…MIIG), 327 to 346 (AAYG…SFLL), 356 to 376 (GLIF…GTWF), 405 to 425 (IIFI…VWNF), 438 to 458 (IAQI…LNLI), 464 to 484 (FPMY…VFVF), 495 to 515 (CILK…SGFA), 517 to 537 (IISY…SASF), and 550 to 570 (IGLI…NIML).

It belongs to the V-ATPase 116 kDa subunit family.

The protein resides in the cell membrane. In terms of biological role, produces ATP from ADP in the presence of a proton gradient across the membrane. This chain is V-type ATP synthase subunit I (atpI), found in Borreliella burgdorferi (strain ATCC 35210 / DSM 4680 / CIP 102532 / B31) (Borrelia burgdorferi).